The sequence spans 344 residues: Proline-rich transmembrane protein 2 (344 aa).

Disordered stretches follow at residues 1–220 (MAAS…GAPP) and 233–265 (GRAH…GGEG). The Cytoplasmic portion of the chain corresponds to 1-272 (MAASSSEVSE…GEGTQKPRDY (272 aa)). S28 is modified (phosphoserine). The segment covering 69–82 (PETTETPVETPETV) has biased composition (low complexity). A phosphothreonine mark is found at T74 and T78. Over residues 124–143 (AEQQSAAPPEPTSEQALQLN) the composition is skewed to polar residues. Residues 151 to 162 (TSQPPPKPPLQA) show a composition bias toward pro residues. A compositionally biased stretch (polar residues) spans 168-178 (ENPTTEVLTES). The segment covering 201-211 (APQPHSPPSTK) has biased composition (pro residues). Phosphoserine is present on S242. Position 244 is an omega-N-methylarginine (R244). Phosphoserine is present on residues S252 and S253. The helical intramembrane region spans 273–293 (IILAILSCFCPMWPVNIVAFA). The Cytoplasmic segment spans residues 294 to 321 (YAVMSRNSLQQGDVDGAQRLGRVAKLLS). A helical transmembrane segment spans residues 322–342 (IVALVGGVLIIIASCVINLGV). At 343–344 (YK) the chain is on the extracellular side.

This sequence belongs to the CD225/Dispanin family. In terms of assembly, component of the outer core of AMPAR complex. AMPAR complex consists of an inner core made of 4 pore-forming GluA/GRIA proteins (GRIA1, GRIA2, GRIA3 and GRIA4) and 4 major auxiliary subunits arranged in a twofold symmetry. One of the two pairs of distinct binding sites is occupied either by CNIH2, CNIH3 or CACNG2, CACNG3. The other harbors CACNG2, CACNG3, CACNG4, CACNG8 or GSG1L. This inner core of AMPAR complex is complemented by outer core constituents binding directly to the GluA/GRIA proteins at sites distinct from the interaction sites of the inner core constituents. Outer core constituents include at least PRRT1, PRRT2, CKAMP44/SHISA9, FRRS1L and NRN1. The proteins of the inner and outer core serve as a platform for other, more peripherally associated AMPAR constituents. Alone or in combination, these auxiliary subunits control the gating and pharmacology of the AMPAR complex and profoundly impact their biogenesis and protein processing. Interacts with intersectin 1/ITSN1. Interacts with SNARE complex components, including SNAP25, STX1A, SYT1 and SYT2; this interaction may inhibit SNARE complex formation. In terms of tissue distribution, neuron-specific expression throughout the brain, including hippocampus (at protein level).

The protein localises to the cell membrane. It localises to the presynaptic cell membrane. Its subcellular location is the synapse. It is found in the cell projection. The protein resides in the axon. The protein localises to the cytoplasmic vesicle. It localises to the secretory vesicle. Its subcellular location is the synaptic vesicle membrane. It is found in the postsynaptic density membrane. The protein resides in the dendritic spine. As a component of the outer core of AMPAR complex, may be involved in synaptic transmission in the central nervous system. In hippocampal neurons, in presynaptic terminals, plays an important role in the final steps of neurotransmitter release, possibly by regulating Ca(2+)-sensing. In the cerebellum, may inhibit SNARE complex formation and down-regulate short-term facilitation. The protein is Proline-rich transmembrane protein 2 (Prrt2) of Rattus norvegicus (Rat).